We begin with the raw amino-acid sequence, 147 residues long: Hemoglobin subunit beta (147 aa).

In terms of domain architecture, Globin spans 2–147 (ELTEAQRGAI…VVSALGKQYH (146 aa)). 2 residues coordinate heme b: His-63 and His-92.

Belongs to the globin family. Heterotetramer of two alpha chains and two beta chains. In terms of tissue distribution, red blood cells.

Its function is as follows. Involved in oxygen transport from gills to the various peripheral tissues. This chain is Hemoglobin subunit beta (hbb), found in Electrophorus electricus (Electric eel).